The chain runs to 625 residues: Endoglucanase 13 (625 aa).

An N-terminal signal peptide occupies residues 1–34 (MAATMNKTPATTFLLIPAAASLVLLLAAAASVEA). Aspartate 91 functions as the Nucleophile in the catalytic mechanism. Histidine 427 is an active-site residue. N-linked (GlcNAc...) asparagine glycosylation occurs at asparagine 440. Residues aspartate 479 and glutamate 488 contribute to the active site. Residues 509 to 530 (ADNTPEYTPAPNAPSPSNGGSP) are disordered.

It belongs to the glycosyl hydrolase 9 (cellulase E) family.

It is found in the secreted. The enzyme catalyses Endohydrolysis of (1-&gt;4)-beta-D-glucosidic linkages in cellulose, lichenin and cereal beta-D-glucans.. The chain is Endoglucanase 13 (GLU6) from Oryza sativa subsp. indica (Rice).